The primary structure comprises 64 residues: Temporin-ALf (64 aa).

Positions 1–22 (MFTLKKSLLLLFFLGTINLSLC) are cleaved as a signal peptide. A propeptide spanning residues 23-46 (EQERNAEEERRDEPDERNAEVEKR) is cleaved from the precursor. Leu62 carries the leucine amide modification.

Expressed by the skin glands.

It is found in the secreted. Its function is as follows. Antimicrobial peptide with activity against Gram-positive and Gram-negative bacteria and against fungi. Has been tested against S.aureus (MIC=2.5 ug/mL), B.pumilus (MIC=5.0 ug/mL), B.cereus (MIC=30.0 ug/mL), E.coli (MIC=2.5 ug/mL), B.dysenteriae (MIC=5.0 ug/mL), A.cacoaceticus (MIC=30.0 ug/mL), P.aeruginosa (MIC=5.0 ug/mL) and C.albicans (MIC=2.5 ug/mL). Also shows a weak hemolytic activity. This is Temporin-ALf from Amolops loloensis (Lolokou Sucker Frog).